Here is an 822-residue protein sequence, read N- to C-terminus: Telomere length regulation protein TEL2 homolog (822 aa).

The segment at 442–504 (NDDEEEQPDA…ADQEKKKSAP (63 aa)) is disordered. Positions 465-477 (VSSQSVASDPGNG) are enriched in polar residues. Residues 480 to 489 (SELDSDDDLT) are compositionally biased toward acidic residues.

This sequence belongs to the TEL2 family.

It is found in the cytoplasm. The protein localises to the membrane. Its subcellular location is the nucleus. Regulator of the DNA damage response (DDR). Part of the TTT complex that is required to stabilize protein levels of the phosphatidylinositol 3-kinase-related protein kinase (PIKK) family proteins. Promotes assembly, stabilizes and maintains the activity of TORC complexes, which regulate cell growth and survival in response to nutrient and hormonal signals. May be involved in telomere length regulation. The protein is Telomere length regulation protein TEL2 homolog (telo2) of Danio rerio (Zebrafish).